The sequence spans 343 residues: Methylthioribose-1-phosphate isomerase (343 aa).

Residues 48–50 (RGA), Arg88, and Gln193 contribute to the substrate site. Asp234 (proton donor) is an active-site residue. Residue 244–245 (NK) participates in substrate binding.

Belongs to the eIF-2B alpha/beta/delta subunits family. MtnA subfamily.

It carries out the reaction 5-(methylsulfanyl)-alpha-D-ribose 1-phosphate = 5-(methylsulfanyl)-D-ribulose 1-phosphate. It participates in amino-acid biosynthesis; L-methionine biosynthesis via salvage pathway; L-methionine from S-methyl-5-thio-alpha-D-ribose 1-phosphate: step 1/6. Catalyzes the interconversion of methylthioribose-1-phosphate (MTR-1-P) into methylthioribulose-1-phosphate (MTRu-1-P). The polypeptide is Methylthioribose-1-phosphate isomerase (Thermotoga petrophila (strain ATCC BAA-488 / DSM 13995 / JCM 10881 / RKU-1)).